The primary structure comprises 101 residues: Apolipoprotein C-II (101 aa).

The signal sequence occupies residues 1-22 (MGIRYLLVLVLVLLVLGCEVQG). Residues 23 to 28 (AHMPQQ) constitute a propeptide that is removed on maturation. Residues 66–74 (TMDEKIREI) are lipid binding. The lipoprotein lipase cofactor stretch occupies residues 78 to 101 (STAAVSTYAGIFTDQLLSMLKGDQ).

It belongs to the apolipoprotein C2 family. Post-translationally, proapolipoprotein C-II is synthesized as a sialic acid containing glycoprotein which is subsequently desialylated prior to its proteolytic processing. Proapolipoprotein C-II, the major form found in plasma undergoes proteolytic cleavage of its N-terminal hexapeptide to generate apolipoprotein C-II, which occurs as the minor form in plasma.

The protein localises to the secreted. In terms of biological role, component of chylomicrons, very low-density lipoproteins (VLDL), low-density lipoproteins (LDL), and high-density lipoproteins (HDL) in plasma. Plays an important role in lipoprotein metabolism as an activator of lipoprotein lipase. Both proapolipoprotein C-II and apolipoprotein C-II can activate lipoprotein lipase. This Neomonachus schauinslandi (Hawaiian monk seal) protein is Apolipoprotein C-II (APOC2).